The following is a 737-amino-acid chain: Glycogen [starch] synthase, muscle (737 aa).

Serine 8 is subject to Phosphoserine; by AMPK and PKA. The residue at position 11 (serine 11) is a Phosphoserine. Lysine 39 provides a ligand contact to UDP. Residues histidine 205 and arginine 211 each coordinate UDP-alpha-D-glucose. Positions 291, 292, 294, 297, and 301 each coordinate alpha-D-glucose 6-phosphate. A UDP-binding site is contributed by arginine 331. Arginine 331 provides a ligand contact to UDP-alpha-D-glucose. Residue serine 412 is modified to Phosphoserine. Histidine 501 contacts alpha-D-glucose 6-phosphate. UDP-alpha-D-glucose is bound by residues glutamate 510, tryptophan 512, and glycine 513. Residue threonine 515 participates in UDP binding. Alpha-D-glucose 6-phosphate is bound by residues arginine 582 and arginine 586. Residues 634 to 737 are disordered; sequence YRYPRPASVP…PTSSLGEERN (104 aa). At serine 641 the chain carries Phosphoserine; by DYRK2, GSK3-alpha, GSK3-beta and PASK. A phosphoserine; by GSK3-alpha and GSK3-beta mark is found at serine 645 and serine 649. Phosphoserine is present on serine 652. At serine 653 the chain carries Phosphoserine; by GSK3-alpha and GSK3-beta. Serine 657 carries the post-translational modification Phosphoserine; by CK2. Over residues 658-681 the composition is skewed to acidic residues; sequence EDEEDPRNGPLEEDGERYDEDEEA. Positions 682–695 are enriched in basic and acidic residues; it reads AKDRRNIRAPEWPR. At serine 698 the chain carries Phosphoserine. Over residues 698–714 the composition is skewed to polar residues; that stretch reads SCTSSTSGSKRNSVDTA. Threonine 700 bears the Phosphothreonine mark. The residue at position 710 (serine 710) is a Phosphoserine. Low complexity predominate over residues 715 to 737; that stretch reads TSSSLSTPSEPLSPTSSLGEERN. Residue threonine 721 is modified to Phosphothreonine. Residues serine 727 and serine 731 each carry the phosphoserine modification.

The protein belongs to the glycosyltransferase 3 family. As to quaternary structure, part of the GYS1-GYG1 complex, a heterooctamer composed of a tetramer of GYS1 and 2 dimers of GYG1, where each GYS1 protomer binds to one GYG1 subunit (via GYG1 C-terminus); the GYS1 tetramer may dissociate from GYG1 dimers to continue glycogen polymerization on its own. In terms of processing, phosphorylation at Ser-8 by AMPK inactivates the enzyme activity. Primed phosphorylation at Ser-657 (site 5) by CSNK2A1 and CSNK2A2 is required for inhibitory phosphorylation at Ser-641 (site 3a), Ser-645 (site 3b), Ser-649 (site 3c) and Ser-653 (site 4) by GSK3A an GSK3B. Phosphorylated at Ser-641 by PASK, leading to inactivation; phosphorylation by PASK is inhibited by glycogen. Phosphorylated at Ser-641 by DYRK2, leading to inactivation. Dephosphorylation at Ser-641 and Ser-645 by PP1 activates the enzyme.

The catalysed reaction is [(1-&gt;4)-alpha-D-glucosyl](n) + UDP-alpha-D-glucose = [(1-&gt;4)-alpha-D-glucosyl](n+1) + UDP + H(+). It participates in glycan biosynthesis; glycogen biosynthesis. With respect to regulation, allosteric activation by glucose-6-phosphate. Phosphorylation reduces the activity towards UDP-glucose. When in the non-phosphorylated state, glycogen synthase does not require glucose-6-phosphate as an allosteric activator; when phosphorylated it does. Glycogen synthase participates in the glycogen biosynthetic process along with glycogenin and glycogen branching enzyme. Extends the primer composed of a few glucose units formed by glycogenin by adding new glucose units to it. In this context, glycogen synthase transfers the glycosyl residue from UDP-Glc to the non-reducing end of alpha-1,4-glucan. This Pongo abelii (Sumatran orangutan) protein is Glycogen [starch] synthase, muscle (GYS1).